The primary structure comprises 75 residues: UPF0352 protein YejL (75 aa).

It belongs to the UPF0352 family.

The protein is UPF0352 protein YejL of Salmonella arizonae (strain ATCC BAA-731 / CDC346-86 / RSK2980).